A 396-amino-acid chain; its full sequence is Anticodon nuclease (396 aa).

In terms of biological role, anticodon endonuclease (ACNase) that triggers the cleavage ligation of tRNA(Lys). It is activated by T4 stp protein and masked by the prrD protein (the endonuclease subunit of EcoprrI). The prr locus restricts phage T4 mutants lacking polynucleotide kinase or RNA ligase; T4 mutants lacking these genes manifest a T4-induced anticodon nuclease (ACNase). It is thought that Stp and other T4-encoded ACNase factors counteract the masking agents, thus activating the latent ACNase. In Escherichia coli, this protein is Anticodon nuclease.